Consider the following 413-residue polypeptide: GRTGAGFTLLTLLLLLPQPTSQFWLFNVLFPPTTTPEAPPTNSTPPWCLVPGFLGNQLEAKLDKPDVVNWMCYRKTEDYFTIWLNLNTFLPVGVDCWIDNTRVVYNRTARKMTNAPGVHIRVPGFGKTYSVEYLDQSKLAGYLHTLVQNLVNNGYVRDQTVRAAPYDWRVGPQEQPEYFQNLKALIEEMHDEYQQRVFLIGHSMGNLNVLYFLLQQKQAWKDQYIGGFISLGAPWGGSVKPLRVLASGDNQGIPLMSNIKLREEQRMTTTSPWMFPTSLAWPEDHVFISTPSYNYTYRDYQRFFTDVNLEDGWYMWEDMKDLLKGLPPPGVDTYCLYGTGYPTVETYIYDEHFPYEDPVDMIYGDGDDTVNKRSSELCKRWRNQQKQKVHVQELRGIDHLNMVFSNLTLTLHQ.

A signal peptide spans 1–22; that stretch reads GRTGAGFTLLTLLLLLPQPTSQ. Cys-72 and Cys-96 are disulfide-bonded. N-linked (GlcNAc...) asparagine glycosylation is present at Asn-106. Catalysis depends on Ser-203, which acts as the Charge relay system. Ser-203 serves as the catalytic Nucleophile. A glycan (N-linked (GlcNAc...) asparagine) is linked at Asn-294. The cysteines at positions 335 and 378 are disulfide-linked. Residues Asp-367 and His-399 each act as charge relay system in the active site. Asn-406 carries an N-linked (GlcNAc...) asparagine glycan.

It belongs to the AB hydrolase superfamily. Lipase family. As to expression, detected in blood plasma (at protein level). Expressed in liver, brain and adrenal glands. Lower expression in testes. In laying hens, expressed higher in brain than in liver. In roosters, higher levels in liver than in brain.

The protein resides in the secreted. It catalyses the reaction a sterol + a 1,2-diacyl-sn-glycero-3-phosphocholine = a sterol ester + a 1-acyl-sn-glycero-3-phosphocholine. Its activity is regulated as follows. APOA1 is the most potent activator in plasma. Also activated by APOE, APOC1 and APOA4. In terms of biological role, central enzyme in the extracellular metabolism of plasma lipoproteins. Synthesized mainly in the liver and secreted into plasma where it converts cholesterol and phosphatidylcholines (lecithins) to cholesteryl esters and lysophosphatidylcholines on the surface of high and low density lipoproteins (HDLs and LDLs). The cholesterol ester is then transported back to the liver. Also produced in the brain by primary astrocytes, and esterifies free cholesterol on nascent APOE-containing lipoproteins secreted from glia and influences cerebral spinal fluid (CSF) APOE- and APOA1 levels. Together with APOE and the cholesterol transporter ABCA1, plays a key role in the maturation of glial-derived, nascent lipoproteins. Required for remodeling high-density lipoprotein particles into their spherical forms. Has a preference for plasma 16:0-18:2 or 18:O-18:2 phosphatidylcholines. This is Phosphatidylcholine-sterol acyltransferase (LCAT) from Gallus gallus (Chicken).